The sequence spans 148 residues: Glutamyl-tRNA(Gln) amidotransferase subunit C, mitochondrial (148 aa).

This sequence belongs to the GatC family. As to quaternary structure, subunit of the heterotrimeric GatCAB amidotransferase (AdT) complex, composed of A, B and C subunits.

Its subcellular location is the mitochondrion. It carries out the reaction L-glutamyl-tRNA(Gln) + L-glutamine + ATP + H2O = L-glutaminyl-tRNA(Gln) + L-glutamate + ADP + phosphate + H(+). Allows the formation of correctly charged Gln-tRNA(Gln) through the transamidation of misacylated Glu-tRNA(Gln) in the mitochondria. The reaction takes place in the presence of glutamine and ATP through an activated gamma-phospho-Glu-tRNA(Gln). The polypeptide is Glutamyl-tRNA(Gln) amidotransferase subunit C, mitochondrial (Drosophila pseudoobscura pseudoobscura (Fruit fly)).